A 213-amino-acid polypeptide reads, in one-letter code: Flagellin A1 (213 aa).

Residues Met-1–Gly-10 constitute a propeptide that is removed on maturation. 3 N-linked (GlcNAc...) asparagine glycosylation sites follow: Asn-70, Asn-115, and Asn-172.

This sequence belongs to the archaeal flagellin family. Glycosylated by a pentasaccharide similar to the S-layer glycoprotein, probably comprising a hexose, 2 hexuronic acids, a methyl ester of a hexuronic acid and mannose. Glycosylation is required for biosynthesis of stable flagella.

The protein localises to the archaeal flagellum. Its function is as follows. Major flagellin required for motility. Not involved in PibD-dependent surface adhesion. Much more abundant in cells compared to FlgA2. The polypeptide is Flagellin A1 (flgA1) (Haloferax volcanii (strain ATCC 29605 / DSM 3757 / JCM 8879 / NBRC 14742 / NCIMB 2012 / VKM B-1768 / DS2) (Halobacterium volcanii)).